Reading from the N-terminus, the 727-residue chain is UvrABC system protein C (727 aa).

The GIY-YIG domain occupies 16–95 (VDPGVYKFRD…IKEFDPRFNV (80 aa)). Residues 208-243 (DRLVRQLEARMQEASEELDFETAARLRDDVGALRRA) form the UVR domain. Disordered stretches follow at residues 503–527 (DADQVSGGDGGDLAPEAAIDPQTGR) and 679–727 (SADV…TGVE). A compositionally biased stretch (basic and acidic residues) spans 701–711 (NGADIPREPVE). Over residues 718–727 (QSASQRTGVE) the composition is skewed to polar residues.

The protein belongs to the UvrC family. Interacts with UvrB in an incision complex.

The protein localises to the cytoplasm. In terms of biological role, the UvrABC repair system catalyzes the recognition and processing of DNA lesions. UvrC both incises the 5' and 3' sides of the lesion. The N-terminal half is responsible for the 3' incision and the C-terminal half is responsible for the 5' incision. The protein is UvrABC system protein C of Rhodococcus jostii (strain RHA1).